We begin with the raw amino-acid sequence, 1562 residues long: Pikromycin polyketide synthase component PikAIII (1562 aa).

In terms of domain architecture, Ketosynthase family 3 (KS3) spans 34–464; it reads HEPVAIVGMA…GTNAHVVLEE (431 aa). Residues 37-1475 form a module 5 region; the sequence is VAIVGMACRL…TPAALAAHLH (1439 aa). C209 acts as the Acyl-thioester intermediate; for beta-ketoacyl synthase activity in catalysis. Catalysis depends on for beta-ketoacyl synthase activity residues H344 and H384. The acyltransferase stretch occupies residues 565 to 866; it reads FVFPGQGTQW…GGQERLVTSL (302 aa). S655 functions as the Acyl-ester intermediate; for acyltransferase activity in the catalytic mechanism. The interval 1116-1293 is beta-ketoacyl reductase; the sequence is GTVLITGGTG…ATSVAWGLWA (178 aa). NADP(+) contacts are provided by residues 1124 to 1127, 1147 to 1150, 1176 to 1177, K1226, and 1248 to 1249; these read TGAL, SRSG, DV, and YS. The active-site Acyl-ester intermediate; for beta-ketoacyl reductase activity is Y1263. In terms of domain architecture, Carrier spans 1403 to 1478; it reads PALLTLVRTH…ALAAHLHEAY (76 aa). Position 1438 is an O-(pantetheine 4'-phosphoryl)serine (S1438). A disordered region spans residues 1519 to 1548; sequence GIEPEPGSGGSDGGAADPGAEPEASIDDLD. Over residues 1532–1541 the composition is skewed to low complexity; it reads GAADPGAEPE.

Homodimer. Pikromycin PKS consists of a combination of multimodular (PikAI and PikAII) and monomodular (PikAIII and PikAIV) polypeptides each coding for a functional synthase subunit which participates in 1 (monomodular) or 2 (multimodular) of the six FAS-like elongation steps required for formation of the polyketide. Module 1, 2, 3, 4, 5, and 6 participating in biosynthesis steps 1, 2, 3, 4, 5, and 6, respectively. Pantetheine 4'-phosphate is required as a cofactor.

The catalysed reaction is 5 (S)-methylmalonyl-CoA + malonyl-CoA + 5 NADPH + 11 H(+) = 10-deoxymethynolide + 6 CO2 + 5 NADP(+) + 6 CoA + 2 H2O. It carries out the reaction 6 (S)-methylmalonyl-CoA + malonyl-CoA + 5 NADPH + 12 H(+) = narbonolide + 7 CO2 + 5 NADP(+) + 7 CoA + 2 H2O. The protein operates within antibiotic biosynthesis. Involved in the biosynthesis of 12- and 14-membered ring macrolactone antibiotics such as methymycin and neomethymycin, and pikromycin and narbomycin, respectively. Component of the pikromycin PKS which catalyzes the biosynthesis of both precursors 10-deoxymethynolide (12-membered ring macrolactone) and narbonolide (14-membered ring macrolactone). Chain elongation through PikAI, PikAII and PikAIII followed by thioesterase catalyzed termination results in the production of 10-deoxymethynolide, while continued elongation through PikAIV, followed by thioesterase (TE) catalyzed cyclization results in the biosynthesis of the narbonolide. The protein is Pikromycin polyketide synthase component PikAIII of Streptomyces venezuelae.